Reading from the N-terminus, the 241-residue chain is Probable histone-lysine N-methyltransferase set-23 (241 aa).

In terms of domain architecture, Pre-SET spans 25–85 (QGCDCETQCS…SCRNKVVQNG (61 aa)). The Zn(2+) site is built by cysteine 27, cysteine 29, cysteine 33, cysteine 39, cysteine 41, cysteine 64, cysteine 68, cysteine 70, and cysteine 77. Residues 88–210 (KKLKIFSTSE…VGEELSYDYG (123 aa)) form the SET domain. S-adenosyl-L-methionine-binding positions include 98-100 (KGD), aspartate 138, tyrosine 140, arginine 167, and 170-171 (NH). Residues cysteine 173, cysteine 222, cysteine 224, and cysteine 229 each contribute to the Zn(2+) site. Positions 218 to 234 (NRKLCLCRSENCRKYLP) constitute a Post-SET domain.

This sequence belongs to the class V-like SAM-binding methyltransferase superfamily. Histone-lysine methyltransferase family. Suvar3-9 subfamily.

It is found in the nucleus. The protein resides in the chromosome. It carries out the reaction L-lysyl-[histone] + S-adenosyl-L-methionine = N(6)-methyl-L-lysyl-[histone] + S-adenosyl-L-homocysteine + H(+). In terms of biological role, probable histone methyltransferase required for embryonic development. The polypeptide is Probable histone-lysine N-methyltransferase set-23 (Caenorhabditis briggsae).